A 392-amino-acid chain; its full sequence is Protein Wnt-1 (392 aa).

The N-terminal stretch at 1–16 (MKCLWLLVITVLCLRC) is a signal peptide. Cystine bridges form between Cys89-Cys100, Cys142-Cys150, Cys152-Cys179, Cys227-Cys241, Cys229-Cys236, Cys321-Cys352, Cys337-Cys347, Cys351-Cys391, Cys367-Cys382, Cys369-Cys379, and Cys374-Cys375. The N-linked (GlcNAc...) asparagine glycan is linked to Asn99. The O-palmitoleoyl serine; by PORCN moiety is linked to residue Ser233. Asn338 and Asn368 each carry an N-linked (GlcNAc...) asparagine glycan.

Belongs to the Wnt family. Palmitoleoylated by porcupine. The lipid group functions as a sorting signal, targeting the ligand to polarized vesicles that transport WNT-1 to unique sites at the cell surface. Depalmitoleoylated by notum, leading to inhibit Wnt signaling pathway.

It localises to the secreted. It is found in the extracellular space. The protein resides in the extracellular matrix. Ligand for members of the frizzled family of seven transmembrane receptors. Probable developmental protein. The polypeptide is Protein Wnt-1 (WNT-1) (Bombyx mori (Silk moth)).